Reading from the N-terminus, the 359-residue chain is Proton-gated ion channel (359 aa).

An N-terminal signal peptide occupies residues 1–43 (MFPTGWRPKLSESIAASRMLWQPMAAVAVVQIGLLWFSPPVWG). The Periplasmic portion of the chain corresponds to 44–235 (QDMVSPPPPI…LDYQLRISRQ (192 aa)). The chain crosses the membrane as a helical span at residues 236–258 (YFSYIPNIILPMLFILFISWTAF). Topologically, residues 259–261 (WST) are cytoplasmic. A helical transmembrane segment spans residues 262 to 286 (SYEANVTLVVSTLIAHIAFNILVET). Topologically, residues 287 to 294 (NLPKTPYM) are periplasmic. A helical membrane pass occupies residues 295–323 (TYTGAIIFMIYLFYFVAVIEVTVQHYLKV). At 324 to 326 (ESQ) the chain is on the cytoplasmic side. The chain crosses the membrane as a helical span at residues 327–359 (PARAASITRASRIAFPVVFLLANIILAFLFFGF).

This sequence belongs to the ligand-gated ion channel (TC 1.A.9) family. In terms of assembly, homopentamer.

It localises to the cell inner membrane. Its activity is regulated as follows. Tetraethylammonium (TEA) and tetrabutylammonium (TBA) inhibit the proton-activated currents in a dose- and voltage-dependent manner in vitro, whereas the blocker of acid sensing ion channels, amiloride, has no effect. Channel current of GLIC can be inhibited by inhaled and intravenous general anesthetics at and below concentrations used clinically. Ion conduction is also inhibited by lidocaine and by divalent transition metal ions such as cadmium ions. In terms of biological role, cationic channel with similar permeabilities for Na(+) and K(+), that is activated by an increase of the proton concentration on the extracellular side. Displays no permeability for chloride ions. Shows slow kinetics of activation, no desensitization and a single channel conductance of 8 pS. Might contribute to adaptation to external pH change. In Gloeobacter violaceus (strain ATCC 29082 / PCC 7421), this protein is Proton-gated ion channel (glvI).